The following is a 457-amino-acid chain: Putative ankyrin repeat protein L112 (457 aa).

11 ANK repeats span residues 62 to 91 (QRIT…NHNP), 104 to 132 (SKDT…ASIN), 133 to 162 (SSSL…EIIN), 193 to 219 (YINE…LDCS), 220 to 249 (ITVD…DPRK), 251 to 279 (KCWA…KPKE), 281 to 309 (NVDA…DTIT), 310 to 339 (RRDW…SQKS), 341 to 368 (NKAL…DFRQ), 400 to 429 (NNNE…DYNP), and 431 to 457 (KDQL…DTLK).

In Acanthamoeba polyphaga mimivirus (APMV), this protein is Putative ankyrin repeat protein L112.